We begin with the raw amino-acid sequence, 625 residues long: MSTPAIPQDLQLNPSQRTQSAFREQRRQKLKEHLLKRKTSFACKQENQMLLSDGDQRVRTSEGQIQEGKKVLKIKTEMADKENVGRPTGIKNNLTVEKNCIPLKPSNELTNSTLATDPPNSEDNNQTLPLLPVKDDPQSQHRTLSQTFHLKNNSKKKPVITEKPKHDANVPKKPVLGAYRGQIVQSKINSFRKPLQVKDESSATTKKLPATVSKATKPQPGDVSSITVKSDRASHMTSTTKFASTTSQIRHLVRPPIRSQHNKAQDAMKPGNSRMSANVTVQKGPREKELNTVLSGIKTSSSQDIKGDKTLSKSMAAGMVVRPASSSNTKLIEKSKSAGQRSHTTVKAAVDSRWTQPKETAEERKARLSEWKAGKGRILKRPPSSAVTRPEPETQNEQPVGSFWTTMAEEDEQRLFTEKVNKTFSECLNLINEPIEEMRHTIVDILTRKSQEKLKFGENIEETSAAEEKIQEAHTDDTGVDLESGKLEMENNPPRNVFQDCEKEQDDKVKDPTSDVKTPSTNTRAGCLIKYNVSTTPYLQSVKKKMQFDETNSAYKELKFLTPVRRSRRLQEKTSKLPDMLKDHYPCVSSLEQLTELGCETDAFVCRPNTALCGMFSEPDPTEEE.

2 stretches are compositionally biased toward polar residues: residues 1-22 (MSTP…QSAF) and 107-128 (NELT…NQTL). 3 disordered regions span residues 1–27 (MSTP…EQRR), 104–138 (KPSN…DDPQ), and 153–173 (NSKK…VPKK). Residues 159–170 (VITEKPKHDANV) show a composition bias toward basic and acidic residues. At Ser-190 the chain carries Phosphoserine. Disordered stretches follow at residues 195-237 (LQVK…SHMT), 259-282 (SQHN…VTVQ), 322-398 (RPAS…QNEQ), and 484-521 (SGKL…TPST). Composition is skewed to basic and acidic residues over residues 359-373 (ETAE…EWKA) and 500-514 (DCEK…DPTS). Phosphothreonine is present on residues Thr-518 and Thr-521. Ser-534 is subject to Phosphoserine. Phosphothreonine occurs at positions 535 and 536. The residue at position 538 (Tyr-538) is a Phosphotyrosine. Ser-541 is modified (phosphoserine).

This sequence belongs to the CKAP2 family. As to quaternary structure, associates with alpha- and beta-tubulins.

It localises to the cytoplasm. The protein resides in the cytoskeleton. Functionally, possesses microtubule stabilizing properties. Involved in regulating aneuploidy, cell cycling, and cell death in a p53/TP53-dependent manner. The protein is Cytoskeleton-associated protein 2 (CKAP2) of Bos taurus (Bovine).